The primary structure comprises 229 residues: ATP synthase subunit a (229 aa).

6 consecutive transmembrane segments (helical) span residues L14–L34, Y68–F88, I98–W118, F124–I144, G157–F179, and N189–I209.

It belongs to the ATPase A chain family. In terms of assembly, F-type ATPases have 2 components, CF(1) - the catalytic core - and CF(0) - the membrane proton channel. CF(1) has five subunits: alpha(3), beta(3), gamma(1), delta(1), epsilon(1). CF(0) has three main subunits: a, b and c.

It localises to the mitochondrion inner membrane. Mitochondrial membrane ATP synthase (F(1)F(0) ATP synthase or Complex V) produces ATP from ADP in the presence of a proton gradient across the membrane which is generated by electron transport complexes of the respiratory chain. F-type ATPases consist of two structural domains, F(1) - containing the extramembraneous catalytic core and F(0) - containing the membrane proton channel, linked together by a central stalk and a peripheral stalk. During catalysis, ATP synthesis in the catalytic domain of F(1) is coupled via a rotary mechanism of the central stalk subunits to proton translocation. Key component of the proton channel; it may play a direct role in the translocation of protons across the membrane. This is ATP synthase subunit a (ATPASE6) from Metridium senile (Brown sea anemone).